Reading from the N-terminus, the 356-residue chain is DNA-directed RNA polymerase subunit alpha (356 aa).

The segment at 1–230 is alpha N-terminal domain (alpha-NTD); the sequence is MNLHRISSEP…DLLKPLLKVE (230 aa). The tract at residues 267 to 356 is alpha C-terminal domain (alpha-CTD); the sequence is IDQPLLPADS…IRKSYGHILG (90 aa).

Belongs to the RNA polymerase alpha chain family. In plastids the minimal PEP RNA polymerase catalytic core is composed of four subunits: alpha, beta, beta', and beta''. When a (nuclear-encoded) sigma factor is associated with the core the holoenzyme is formed, which can initiate transcription.

It is found in the plastid. The protein resides in the chloroplast. It carries out the reaction RNA(n) + a ribonucleoside 5'-triphosphate = RNA(n+1) + diphosphate. In terms of biological role, DNA-dependent RNA polymerase catalyzes the transcription of DNA into RNA using the four ribonucleoside triphosphates as substrates. This chain is DNA-directed RNA polymerase subunit alpha, found in Zygnema circumcarinatum (Green alga).